Reading from the N-terminus, the 163-residue chain is 6,7-dimethyl-8-ribityllumazine synthase (163 aa).

5-amino-6-(D-ribitylamino)uracil-binding positions include phenylalanine 27, 58-60, and 87-89; these read ALE and CVV. 92–93 contributes to the (2S)-2-hydroxy-3-oxobutyl phosphate binding site; the sequence is DT. Histidine 95 serves as the catalytic Proton donor. Asparagine 120 provides a ligand contact to 5-amino-6-(D-ribitylamino)uracil. A (2S)-2-hydroxy-3-oxobutyl phosphate-binding site is contributed by arginine 134.

This sequence belongs to the DMRL synthase family.

The catalysed reaction is (2S)-2-hydroxy-3-oxobutyl phosphate + 5-amino-6-(D-ribitylamino)uracil = 6,7-dimethyl-8-(1-D-ribityl)lumazine + phosphate + 2 H2O + H(+). It functions in the pathway cofactor biosynthesis; riboflavin biosynthesis; riboflavin from 2-hydroxy-3-oxobutyl phosphate and 5-amino-6-(D-ribitylamino)uracil: step 1/2. In terms of biological role, catalyzes the formation of 6,7-dimethyl-8-ribityllumazine by condensation of 5-amino-6-(D-ribitylamino)uracil with 3,4-dihydroxy-2-butanone 4-phosphate. This is the penultimate step in the biosynthesis of riboflavin. In Nitrobacter hamburgensis (strain DSM 10229 / NCIMB 13809 / X14), this protein is 6,7-dimethyl-8-ribityllumazine synthase.